We begin with the raw amino-acid sequence, 71 residues long: UPF0346 protein BcerKBAB4_2120 (71 aa).

The protein belongs to the UPF0346 family.

The chain is UPF0346 protein BcerKBAB4_2120 from Bacillus mycoides (strain KBAB4) (Bacillus weihenstephanensis).